The following is a 602-amino-acid chain: UPF0329 protein ECU02_0060 (602 aa).

Positions 313–345 (EEDERKRAEAESARNREELLRMEEREKGKEKGS) are enriched in basic and acidic residues. The segment at 313 to 407 (EEDERKRAEA…SPKEESKGEE (95 aa)) is disordered. Residues 346–356 (KGKGRKKRGKK) are compositionally biased toward basic residues. A compositionally biased stretch (basic and acidic residues) spans 357-369 (GAGEAKEESKEED). The segment covering 370 to 384 (RGGEEEESVEADVPV) has biased composition (acidic residues).

This sequence belongs to the UPF0329 family.

This is UPF0329 protein ECU02_0060 from Encephalitozoon cuniculi (strain GB-M1) (Microsporidian parasite).